We begin with the raw amino-acid sequence, 1103 residues long: Voltage-dependent calcium channel subunit alpha-2/delta-1 (1103 aa).

The N-terminal stretch at Met1 to Glu24 is a signal peptide. Residues Glu25–Gly1073 are Extracellular-facing. Asn92 is a glycosylation site (N-linked (GlcNAc...) asparagine). Ser119 is subject to Phosphoserine. 2 N-linked (GlcNAc...) asparagine glycosylation sites follow: Asn136 and Asn184. Residues Asp253–Leu430 form the VWFA domain. Positions 259, 261, and 263 each coordinate a divalent metal cation. The MIDAS-like motif signature appears at Asp259–Ser263. Residues Asn324 and Asn348 are each glycosylated (N-linked (GlcNAc...) asparagine). The cysteines at positions 404 and 1059 are disulfide-linked. Residues Trp446 to Pro537 form the Cache domain. N-linked (GlcNAc...) asparagine glycosylation is found at Asn613, Asn781, and Asn888. Residues Val1074–Leu1094 traverse the membrane as a helical segment. Residues Val1095–Leu1103 lie on the Cytoplasmic side of the membrane.

This sequence belongs to the calcium channel subunit alpha-2/delta family. As to quaternary structure, dimer formed of alpha-2-1 and delta-1 chains; disulfide-linked. Voltage-dependent calcium channels are multisubunit complexes, consisting of alpha-1 (CACNA1), alpha-2 (CACNA2D), beta (CACNB) and delta (CACNA2D) subunits in a 1:1:1:1 ratio. Post-translationally, proteolytically processed into subunits alpha-2-1 and delta-1 that are disulfide-linked. As to expression, isoform 2A is expressed in skeletal muscle and aorta. Isoform 2B is expressed in brain. Isoform 2C is expressed in heart. Isoform 2D is expressed in heart and smooth muscle. Isoform 2E is expressed in smooth muscle. All five isoforms are expressed in the cardiovascular system.

The protein resides in the membrane. It localises to the cell membrane. The alpha-2/delta subunit of voltage-dependent calcium channels regulates calcium current density and activation/inactivation kinetics of the calcium channel. Plays an important role in excitation-contraction coupling. The sequence is that of Voltage-dependent calcium channel subunit alpha-2/delta-1 (Cacna2d1) from Mus musculus (Mouse).